Here is a 149-residue protein sequence, read N- to C-terminus: Large ribosomal subunit protein bL9 (149 aa).

Belongs to the bacterial ribosomal protein bL9 family.

Functionally, binds to the 23S rRNA. The chain is Large ribosomal subunit protein bL9 from Teredinibacter turnerae (strain ATCC 39867 / T7901).